A 398-amino-acid chain; its full sequence is Serine/threonine-protein kinase ppk23 (398 aa).

In terms of domain architecture, Protein kinase spans 74 to 359; it reads YEILEKIEEG…AKEALEHPYF (286 aa). ATP contacts are provided by residues 80-88 and Lys103; that span reads IEEGSYGIV. Residue Asp198 is the Proton acceptor of the active site. Positions 359–398 are disordered; it reads FYESPRPKDPKFFPTFPSKAKGESKEKNVFQSFRSASPKK. Residues 387–398 are compositionally biased toward polar residues; sequence VFQSFRSASPKK.

This sequence belongs to the protein kinase superfamily. Ser/Thr protein kinase family.

The protein localises to the nucleus. The enzyme catalyses L-seryl-[protein] + ATP = O-phospho-L-seryl-[protein] + ADP + H(+). The catalysed reaction is L-threonyl-[protein] + ATP = O-phospho-L-threonyl-[protein] + ADP + H(+). The sequence is that of Serine/threonine-protein kinase ppk23 (ppk23) from Schizosaccharomyces pombe (strain 972 / ATCC 24843) (Fission yeast).